We begin with the raw amino-acid sequence, 115 residues long: NAD(P)H-quinone oxidoreductase subunit M (115 aa).

This sequence belongs to the complex I NdhM subunit family. NDH-1 can be composed of about 15 different subunits; different subcomplexes with different compositions have been identified which probably have different functions.

Its subcellular location is the cellular thylakoid membrane. The catalysed reaction is a plastoquinone + NADH + (n+1) H(+)(in) = a plastoquinol + NAD(+) + n H(+)(out). It carries out the reaction a plastoquinone + NADPH + (n+1) H(+)(in) = a plastoquinol + NADP(+) + n H(+)(out). In terms of biological role, NDH-1 shuttles electrons from an unknown electron donor, via FMN and iron-sulfur (Fe-S) centers, to quinones in the respiratory and/or the photosynthetic chain. The immediate electron acceptor for the enzyme in this species is believed to be plastoquinone. Couples the redox reaction to proton translocation, and thus conserves the redox energy in a proton gradient. Cyanobacterial NDH-1 also plays a role in inorganic carbon-concentration. The chain is NAD(P)H-quinone oxidoreductase subunit M from Prochlorococcus marinus (strain NATL1A).